A 411-amino-acid chain; its full sequence is Argininosuccinate synthase (411 aa).

11-19 contributes to the ATP binding site; the sequence is AYSGGLDTS. Tyr-88 contacts L-citrulline. Residue Gly-118 coordinates ATP. Positions 120, 124, and 125 each coordinate L-aspartate. L-citrulline is bound at residue Asn-124. L-citrulline is bound by residues Arg-128, Ser-176, Glu-261, and Tyr-273.

The protein belongs to the argininosuccinate synthase family. Type 1 subfamily. Homotetramer.

The protein resides in the cytoplasm. The enzyme catalyses L-citrulline + L-aspartate + ATP = 2-(N(omega)-L-arginino)succinate + AMP + diphosphate + H(+). Its pathway is amino-acid biosynthesis; L-arginine biosynthesis; L-arginine from L-ornithine and carbamoyl phosphate: step 2/3. The polypeptide is Argininosuccinate synthase (Lactiplantibacillus plantarum (strain ATCC BAA-793 / NCIMB 8826 / WCFS1) (Lactobacillus plantarum)).